A 315-amino-acid polypeptide reads, in one-letter code: Thymidylate synthase (315 aa).

DUMP contacts are provided by residues Arg29 and 156 to 157 (RR). Cys176 (nucleophile) is an active-site residue. DUMP is bound by residues 213–216 (RSCD), Asn224, and 254–256 (HVY). (6R)-5,10-methylene-5,6,7,8-tetrahydrofolate is bound at residue Asp216.

Belongs to the thymidylate synthase family. As to quaternary structure, homodimer.

The catalysed reaction is dUMP + (6R)-5,10-methylene-5,6,7,8-tetrahydrofolate = 7,8-dihydrofolate + dTMP. It participates in pyrimidine metabolism; dTTP biosynthesis. The protein is Thymidylate synthase (TMP1) of Candida albicans (strain SC5314 / ATCC MYA-2876) (Yeast).